Reading from the N-terminus, the 128-residue chain is Small ribosomal subunit protein uS9 (128 aa).

As to quaternary structure, part of the 30S ribosomal subunit. Contacts proteins S7 and S10.

Part of the top of the head of the 30S subunit. The C-terminal region penetrates the head emerging in the P-site where it contacts tRNA. The polypeptide is Small ribosomal subunit protein uS9 (rpsI) (Thermus thermophilus (strain ATCC 27634 / DSM 579 / HB8)).